The primary structure comprises 412 residues: Light-independent protochlorophyllide reductase subunit N (412 aa).

Cys-17, Cys-42, and Cys-103 together coordinate [4Fe-4S] cluster.

It belongs to the BchN/ChlN family. In terms of assembly, protochlorophyllide reductase is composed of three subunits; ChlL, ChlN and ChlB. Forms a heterotetramer of two ChlB and two ChlN subunits. [4Fe-4S] cluster is required as a cofactor.

It carries out the reaction chlorophyllide a + oxidized 2[4Fe-4S]-[ferredoxin] + 2 ADP + 2 phosphate = protochlorophyllide a + reduced 2[4Fe-4S]-[ferredoxin] + 2 ATP + 2 H2O. It functions in the pathway porphyrin-containing compound metabolism; chlorophyll biosynthesis (light-independent). In terms of biological role, component of the dark-operative protochlorophyllide reductase (DPOR) that uses Mg-ATP and reduced ferredoxin to reduce ring D of protochlorophyllide (Pchlide) to form chlorophyllide a (Chlide). This reaction is light-independent. The NB-protein (ChlN-ChlB) is the catalytic component of the complex. This chain is Light-independent protochlorophyllide reductase subunit N, found in Synechococcus sp. (strain CC9902).